We begin with the raw amino-acid sequence, 865 residues long: Protein fluG (865 aa).

The 92-residue stretch at 442–533 (PGVKYVWTQF…VMTWWKSEQG (92 aa)) folds into the GS beta-grasp domain. One can recognise a GS catalytic domain in the interval 540-865 (PRTNLLNINN…ARRKWLVERY (326 aa)).

Belongs to the glutamine synthetase family.

The protein localises to the cytoplasm. Functionally, may function as a GSI-related enzyme in synthesizing a small diffusible factor that acts as an extracellular signal directing asexual sporulation and perhaps other aspects of colony growth. May be involved in brlA activation (an early transcriptional regulator for conidiation specific gene). This Emericella nidulans (strain FGSC A4 / ATCC 38163 / CBS 112.46 / NRRL 194 / M139) (Aspergillus nidulans) protein is Protein fluG (fluG).